The chain runs to 349 residues: Probable G-protein coupled receptor 21 (349 aa).

The Extracellular segment spans residues 1–32 (MNSTWDGNQSSHPFCLLALGYLETVRFCLLEV). Asn2 and Asn8 each carry an N-linked (GlcNAc...) asparagine glycan. Residues 33–53 (LIIVFLTVLIISGNIIVIFVF) traverse the membrane as a helical segment. Residues 54 to 75 (HCAPLLNHHSTSYFIQTMAYAD) are Cytoplasmic-facing. Residues 76–96 (LLVGVSCLVPSLSLLYYPLPI) traverse the membrane as a helical segment. Topologically, residues 97-104 (EEAMTCQV) are extracellular. A helical transmembrane segment spans residues 105–125 (FGFVVSVLKSISMASLACISI). Residues 126 to 147 (DRYIAITKPLTYNTLVTPWRLR) are Cytoplasmic-facing. The helical transmembrane segment at 148–168 (LCIFLIWLYSTLVFLPSFFHW) threads the bilayer. The Extracellular segment spans residues 169–191 (GKPGYHGDVFQWCAESWHTNSYF). A helical membrane pass occupies residues 192–212 (TLFIVMMLYAPAALIVCFTYF). Residues 213-252 (NIFRICQQHTKEISERQARFSSQNGETGEPQTCPDKRYAM) lie on the Cytoplasmic side of the membrane. Residues 253-273 (VLFRITSVFYVLWLPYIIYFL) traverse the membrane as a helical segment. Residues 274–283 (LESSTGCSSR) lie on the Extracellular side of the membrane. A helical membrane pass occupies residues 284-304 (LASFLTTWLAISNSFCNCIIY). At 305–349 (SLSNSVFQRGLKGLSGSLCTSCASHTTAKDPYTVRCKGPPNGSHI) the chain is on the cytoplasmic side.

Belongs to the G-protein coupled receptor 1 family.

Its subcellular location is the cell membrane. Its function is as follows. Orphan receptor. This chain is Probable G-protein coupled receptor 21 (Gpr21), found in Mus musculus (Mouse).